Here is a 264-residue protein sequence, read N- to C-terminus: Zearalenone hydrolase (264 aa).

The region spanning 27–207 is the AB hydrolase-1 domain; sequence VLVPDGLGEC…KDLEALRGKP (181 aa). Gly32, Ser102, and Ser103 together coordinate zearalenone. Residue Ser102 is part of the active site. Glu126 is a catalytic residue. Residues Trp183, Tyr187, Ser220, and His242 each contribute to the zearalenone site. His242 is an active-site residue.

Belongs to the AB hydrolase superfamily. Hydrolase RutD family. In terms of assembly, homodimer.

The enzyme catalyses zearalenone + H2O = hydrolyzed zearalenone + H(+). Lactonohydrolase that specifically hydrolyzes and deactivates the mycotoxin zearalenone (ZEN) and its zearalenol (ZOL) derivatives. ZHD101 prefers ZEN to ZOL as its substrate, but ZOL, especially the alpha-form, shows higher estrogenic toxicity than ZEN. The polypeptide is Zearalenone hydrolase (Bionectria ochroleuca (Gliocladium roseum)).